An 896-amino-acid chain; its full sequence is Zinc finger protein 574 (896 aa).

3 C2H2-type zinc fingers span residues 16–38 (YVCS…QNSH), 76–98 (YQCL…QELH), and 126–148 (YECV…RQTH). A Phosphoserine modification is found at Ser-164. A C2H2-type 4 zinc finger spans residues 214-236 (YKCSECSQLFQLPADFLEHQATH). The span at 259–272 (VEVPVSQPEPVPSS) shows a compositional bias: low complexity. The disordered stretch occupies residues 259 to 303 (VEVPVSQPEPVPSSDHSYELRNGEALGRDRRGRRARRNNSGEPGG). Basic and acidic residues predominate over residues 274 to 287 (HSYELRNGEALGRD). Ser-298 carries the post-translational modification Phosphoserine. C2H2-type zinc fingers lie at residues 309 to 331 (LFCS…LRSH), 336 to 358 (FKCP…LGDH), 364 to 386 (FLCV…RRAH), and 392 to 413 (HSCP…RRTH). The tract at residues 434–460 (FPEPAPAETGEPEAPEPPVAEESSAEP) is disordered. 6 consecutive C2H2-type zinc fingers follow at residues 466–489 (YRCL…RFVH), 495–517 (HKCS…LRTH), 523–545 (FPCP…RLTH), 551–573 (YRCG…RLVH), 579–601 (YRCQ…RYHH), and 607–630 (YKCR…LVAH). The C2H2-type 15; degenerate zinc-finger motif lies at 636-659 (HRCSSCGAAFPSSLRLREHRCAAA). A C2H2-type 16 zinc finger spans residues 667–689 (FECGTCGKKVGSAARLQAHEAAH). The tract at residues 687 to 733 (AAHAAAGPGEVLAKEPPAPRAPRAARTPITSPTTLGSAAPAAPAAPA) is disordered. Residues 707-732 (APRAARTPITSPTTLGSAAPAAPAAP) show a composition bias toward low complexity. Ser-717 bears the Phosphoserine mark. 4 C2H2-type zinc fingers span residues 738–760 (LECS…RRIH), 766–788 (YPCP…RRLH), 794–816 (FACE…RRIH), and 822–844 (YSCP…RKTH). Arg-832 is modified (asymmetric dimethylarginine).

The protein belongs to the krueppel C2H2-type zinc-finger protein family.

The protein localises to the nucleus. Functionally, may be involved in transcriptional regulation. In Bos taurus (Bovine), this protein is Zinc finger protein 574 (ZNF574).